The sequence spans 312 residues: Translation initiation factor IF3-2, chloroplastic (312 aa).

Residues 1–55 (MAGITSSTVGFNAVFTGITKTVSSHSLFSVDSKLCSLRLSKTELSFTNLTPSPRR) constitute a chloroplast transit peptide. Over residues 253–263 (EMIRKPQEPPT) the composition is skewed to basic and acidic residues. Positions 253–312 (EMIRKPQEPPTRKKKKTAENEASASAAEITAEPEPEPEPEPEPEPEPEPEPEPEPLQIDS) are disordered. The span at 272–282 (NEASASAAEIT) shows a compositional bias: low complexity. Residues 283–305 (AEPEPEPEPEPEPEPEPEPEPEP) show a composition bias toward acidic residues.

This sequence belongs to the IF-3 family. Monomer. In terms of tissue distribution, highly expressed in young, newly emerged leaves.

The protein localises to the plastid. It is found in the chloroplast. Functionally, chloroplast translation initiation factor that is essential for the coordination of leaf and chloroplast development. IF-3 binds to the 30S ribosomal subunit and shifts the equilibrium between 70S ribosomes and their 50S and 30S subunits in favor of the free subunits, thus enhancing the availability of 30S subunits on which protein synthesis initiation begins. This Arabidopsis thaliana (Mouse-ear cress) protein is Translation initiation factor IF3-2, chloroplastic.